We begin with the raw amino-acid sequence, 110 residues long: Thioredoxin Asp f 29 (110 aa).

The Thioredoxin domain maps to 1–110 (MSHNVEKITD…LEAAIKAHVA (110 aa)). Active-site nucleophile residues include cysteine 34 and cysteine 37. A disulfide bond links cysteine 34 and cysteine 37.

The protein belongs to the thioredoxin family.

Participates in various redox reactions through the reversible oxidation of its active center dithiol to a disulfide and catalyzes dithiol-disulfide exchange reactions. The polypeptide is Thioredoxin Asp f 29 (Aspergillus fumigatus (Neosartorya fumigata)).